The sequence spans 646 residues: Tyrosine-protein kinase MasK (646 aa).

At 1 to 415 the chain is on the periplasmic side; sequence MSPPQTTLPV…PTAGGRRWRT (415 aa). Positions 25 to 300 constitute a Protein kinase domain; that stretch reads YVLVRKLAEG…AFADALETFL (276 aa). ATP is bound by residues 31-39 and Lys-57; that span reads LAEGGMAEI. The Proton acceptor role is filled by Asp-163. The tract at residues 373 to 410 is disordered; it reads TSAQRPGMSMRPSSPGVPAHGAASRGSTSPESAPTAGG. The helical transmembrane segment at 416 to 433 threads the bilayer; it reads LAVGLAGGLMLAAAGIVG. Over 434 to 646 the chain is Cytoplasmic; it reads YRQWMTTPAS…VMPFSWRVTQ (213 aa). The disordered stretch occupies residues 521-547; sequence AGAASDVEAEADEEGADAAPVRSKKAS. A compositionally biased stretch (acidic residues) spans 527 to 536; it reads VEAEADEEGA.

Belongs to the protein kinase superfamily. Tyr protein kinase family. Interacts with MglA. In terms of processing, autophosphorylated.

It is found in the cell inner membrane. It carries out the reaction L-tyrosyl-[protein] + ATP = O-phospho-L-tyrosyl-[protein] + ADP + H(+). Functionally, essential for growth. Interacts with MglA to control social gliding motility. The sequence is that of Tyrosine-protein kinase MasK (masK) from Myxococcus xanthus (strain DK1622).